Here is a 323-residue protein sequence, read N- to C-terminus: tRNA U34 carboxymethyltransferase (323 aa).

Residues Lys-91, Trp-105, Lys-110, Gly-130, 181–182 (IE), Met-196, Tyr-200, and Arg-315 contribute to the carboxy-S-adenosyl-L-methionine site.

This sequence belongs to the class I-like SAM-binding methyltransferase superfamily. CmoB family. As to quaternary structure, homotetramer.

It carries out the reaction carboxy-S-adenosyl-L-methionine + 5-hydroxyuridine(34) in tRNA = 5-carboxymethoxyuridine(34) in tRNA + S-adenosyl-L-homocysteine + H(+). Its function is as follows. Catalyzes carboxymethyl transfer from carboxy-S-adenosyl-L-methionine (Cx-SAM) to 5-hydroxyuridine (ho5U) to form 5-carboxymethoxyuridine (cmo5U) at position 34 in tRNAs. The sequence is that of tRNA U34 carboxymethyltransferase from Yersinia pseudotuberculosis serotype O:1b (strain IP 31758).